The sequence spans 177 residues: ATP synthase subunit delta (177 aa).

Belongs to the ATPase delta chain family. As to quaternary structure, F-type ATPases have 2 components, F(1) - the catalytic core - and F(0) - the membrane proton channel. F(1) has five subunits: alpha(3), beta(3), gamma(1), delta(1), epsilon(1). F(0) has three main subunits: a(1), b(2) and c(10-14). The alpha and beta chains form an alternating ring which encloses part of the gamma chain. F(1) is attached to F(0) by a central stalk formed by the gamma and epsilon chains, while a peripheral stalk is formed by the delta and b chains.

Its subcellular location is the cell membrane. Functionally, f(1)F(0) ATP synthase produces ATP from ADP in the presence of a proton or sodium gradient. F-type ATPases consist of two structural domains, F(1) containing the extramembraneous catalytic core and F(0) containing the membrane proton channel, linked together by a central stalk and a peripheral stalk. During catalysis, ATP synthesis in the catalytic domain of F(1) is coupled via a rotary mechanism of the central stalk subunits to proton translocation. This protein is part of the stalk that links CF(0) to CF(1). It either transmits conformational changes from CF(0) to CF(1) or is implicated in proton conduction. The polypeptide is ATP synthase subunit delta (Buchnera aphidicola subsp. Schizaphis graminum (strain Sg)).